The chain runs to 810 residues: MSNEPESSDSKTKKDFSTAILERKKSPNRLVVDEAINDDNSVVSLHPTTMEKLQLFRGDTILIKGKKRKDTVCIALADETCEEPKIRMNKVVRSNLRVRLGDVISVHQCPDVKYGKRVHILPVDDTVEGVTGNLFDAYLKPYFLEAYRPVRKGDLFLVRGGMRSVEFKVIETDPAEYCVVAPDTEIFCEGEPVKREDEERLDEVGYDDVGGVRKQMAQIRELVELPLRHPQLFKSIGVKPPKGILLYGPPGSGKTLIARAVANETGAFFFCINGPEIMSKLAGESESNLRKAFEEAEKNAPSIIFIDEIDSIAPKREKTNGEVERRIVSQLLTLMDGLKSRAHVIVMGATNRPNSIDPALRRFGRFDREIDIGVPDEIGRLEVLRIHTKNMKLAEDVDLERISKDTHGYVGADLAALCTEAALQCIREKMDVIDLEDDSIDAEILNSMAVSNEHFHTALGNSNPSALRETVVEVPNVSWEDIGGLENVKRELQETVQYPVEHPEKFEKFGMSPSKGVLFYGPPGCGKTLLAKAIANECQANFISVKGPELLTMWFGESEANVREIFDKARQSAPCVLFFDELDSIATQRGNSAGDAGGAADRVLNQLLTEMDGMNAKKTVFIIGATNRPDIIDSALLRPGRLDQLIYIPLPDEDSRLNIFKACLRKSPVAKDVDVTALAKYTQGFSGADITEICQRACKYAIRENIEKDIENERRRSQNPEAMEEDMVDDEVSEIRAAHFEESMKYARRSVSDADIRKYQAFAQTLQQSRGFGSEFRFDSTAGVGRTTGVAAADPFATSAAAADDDDLYS.

An N-acetylserine modification is found at S2. A Phosphoserine modification is found at S41. ATP is bound by residues 248 to 255 (GPPGSGKT) and 521 to 528 (GPPGCGKT).

The protein belongs to the AAA ATPase family.

Its subcellular location is the nucleus. It localises to the cytoplasm. The protein localises to the cytoskeleton. The protein resides in the phragmoplast. Probably functions in cell division and growth processes. Interacts with certain SNAREs as part of specialized membrane fusion events where vesicles from the same organelle fuse (homotypic fusion). This Arabidopsis thaliana (Mouse-ear cress) protein is Cell division control protein 48 homolog E (CDC48E).